The primary structure comprises 620 residues: Guanylate cyclase soluble subunit beta-1 (620 aa).

Residue H105 coordinates heme. One can recognise a Guanylate cyclase domain in the interval 421-554 (TILFSGIVGF…NTVNLTSRTE (134 aa)).

The protein belongs to the adenylyl cyclase class-4/guanylyl cyclase family. The active enzyme is formed by a heterodimer of an alpha and a beta subunit. Heterodimer with GUCY1A1. Can also form inactive homodimers in vitro. Requires heme as cofactor.

It is found in the cytoplasm. It carries out the reaction GTP = 3',5'-cyclic GMP + diphosphate. With respect to regulation, activated by nitric oxide in the presence of magnesium or manganese ions. Functionally, mediates responses to nitric oxide (NO) by catalyzing the biosynthesis of the signaling molecule cGMP. The chain is Guanylate cyclase soluble subunit beta-1 (Gucy1b1) from Mus musculus (Mouse).